The chain runs to 749 residues: Amyloid-beta A4 precursor protein-binding family A member 2 (749 aa).

2 disordered regions span residues 1-94 and 130-343; these read MAHQ…PEEE and DTDE…NNIP. At Ser11 the chain carries Phosphoserine. Polar residues predominate over residues 70–80; it reads GDSSSDYVNNT. Acidic residues-rich tracts occupy residues 81–94 and 131–142; these read SEEEDYDEGLPEEE and TDECQEAVEEWT. Positions 185–270 are STXBP1-binding; the sequence is HYCASKEGYQ…SAEACPPIKA (86 aa). At Ser208 the chain carries Phosphoserine. The segment covering 218–227 has biased composition (acidic residues); it reads DLEDQEEDID. Over residues 237–247 the composition is skewed to polar residues; the sequence is LSMTSITSASE. The span at 305–315 shows a compositional bias: basic and acidic residues; that stretch reads RTPEERPKWPH. The 190-residue stretch at 366–555 folds into the PID domain; it reads LIDGIIFAAN…IINTQEMYND (190 aa). 2 PDZ domains span residues 568–653 and 659–735; these read ELQL…NIVS and TVLI…MPAA.

In terms of assembly, part of a multimeric complex containing STXBP1 and syntaxin-1. Binds to the cytoplasmic domain of amyloid-beta protein, and to the nuclear factor NF-kappa-B/p65 via its PDZ domain. Interacts with the N-terminal domain of NECAB3.

Putative function in synaptic vesicle exocytosis by binding to STXBP1, an essential component of the synaptic vesicle exocytotic machinery. May modulate processing of the amyloid-beta precursor protein (APP) and hence formation of APP-beta. This Pongo abelii (Sumatran orangutan) protein is Amyloid-beta A4 precursor protein-binding family A member 2 (APBA2).